Here is a 311-residue protein sequence, read N- to C-terminus: MFHHISVMLNETIDYLDIKEDGIYVDCTLGGAGHALYLLNQLNDDGRLIAIDQDTTALDNAKEVLKDHLHKVTFVHSNFRELTDILKNLNIEKVDGIYYDLGVSSPQLDVPERGFSYHHDAKLDMRMDQTQQLSAYEVVNQWPYEALVKIFYRYGEEKFSKQIARRIETHREHQPIETTLELVDIIKEGIPAKARRKGGHPAKRVFQAIRIAVNDELSAFEDSIEQAIELVKVGGRISVITFHSLEDRLCKQMFQEYEKGPDVPRGLPIIPEAYTPKLKRVNRKPITATDTDLDENNRARSAKLRVAEILK.

Residues 32 to 34 (AGH), Asp52, Phe79, Asp100, and Gln107 contribute to the S-adenosyl-L-methionine site.

Belongs to the methyltransferase superfamily. RsmH family.

It localises to the cytoplasm. It catalyses the reaction cytidine(1402) in 16S rRNA + S-adenosyl-L-methionine = N(4)-methylcytidine(1402) in 16S rRNA + S-adenosyl-L-homocysteine + H(+). Its function is as follows. Specifically methylates the N4 position of cytidine in position 1402 (C1402) of 16S rRNA. This is Ribosomal RNA small subunit methyltransferase H from Staphylococcus haemolyticus (strain JCSC1435).